The following is a 551-amino-acid chain: Structure-specific endonuclease subunit MUS81 (551 aa).

Disordered regions lie at residues 85-131 (LASG…AGYW) and 231-255 (PEEH…EVGV). A Phosphoserine modification is found at Ser-95. Positions 110–131 (VQGSSMPVPTQPQAGSTNAGYW) are enriched in polar residues. The segment at 124-243 (GSTNAGYWPA…HHEESPVPEA (120 aa)) is interaction with BLM. The tract at residues 131–230 (WPAQNSGARE…GLSTLNTAFQ (100 aa)) is winged helix domain (WHD); critical for endonuclease activity. The region spanning 270–372 (LLCVDIGETR…HRIYLVEEHG (103 aa)) is the ERCC4 domain. Active-site residues include Asp-274, Glu-277, and Asp-307. Residues Asp-274, Glu-277, Asp-307, Glu-333, and Arg-334 each contribute to the Mg(2+) site. The segment at 471-545 (VREVFARQLM…LSRTLYQLYC (75 aa)) is helix-hairpin-helix (2HhH); involved in DNA recognition and bending.

It belongs to the XPF family. Part of the heterodimeric DNA structure-specific endonuclease complex MUS81-EME1. Part of the heterodimeric DNA structure-specific endonuclease complex MUS81-EME2. Interacts with BLM; may stimulate the endonuclease activity of MUS81. Interacts with SLX4/BTBD12; this interaction is direct and links the MUS81-EME1 complex to SLX4, which may coordinate the action of the structure-specific endonuclease during DNA repair. Interacts with DCLRE1B/Apollo. Interacts with RECQL5; this interaction stimulates mitotic DNA synthesis. Interacts with CHEK2. It depends on Mg(2+) as a cofactor.

The protein resides in the nucleus. It is found in the nucleolus. Its function is as follows. Catalytic subunit of two functionally distinct, structure-specific, heterodimeric DNA endonucleases MUS81-EME1 and MUS81-EME2 that are involved in the maintenance of genome stability. Both endonucleases have essentially the same substrate specificity though MUS81-EME2 is more active than its MUS81-EME1 counterpart. Both cleave 3'-flaps and nicked Holliday junctions, and exhibit limited endonuclease activity with 5' flaps and nicked double-stranded DNAs. MUS81-EME2 which is active during the replication of DNA is more specifically involved in replication fork processing. Replication forks frequently encounter obstacles to their passage, including DNA base lesions, DNA interstrand cross-links, difficult-to-replicate sequences, transcription bubbles, or tightly bound proteins. One mechanism for the restart of a stalled replication fork involves nucleolytic cleavage mediated by the MUS81-EME2 endonuclease. By acting upon the stalled fork, MUS81-EME2 generates a DNA double-strand break (DSB) that can be repaired by homologous recombination, leading to the restoration of an active fork. MUS81-EME2 could also function in telomere maintenance. MUS81-EME1, on the other hand, is active later in the cell cycle and functions in the resolution of mitotic recombination intermediates including the Holliday junctions, the four-way DNA intermediates that form during homologous recombination. In Rattus norvegicus (Rat), this protein is Structure-specific endonuclease subunit MUS81.